Consider the following 225-residue polypeptide: Cytochrome b6-f complex iron-sulfur subunit, chloroplastic (225 aa).

The N-terminal 46 residues, 1 to 46, are a transit peptide targeting the chloroplast; sequence MASTALSTASNPTQLCRSRASLGKPVKGLGFGRERVPRTATTITCQ. Residues 69 to 89 traverse the membrane as a helical segment; the sequence is LLGAISLPTVGMLVPYGAFFI. One can recognise a Rieske domain in the interval 112-208; sequence AEEWLKTHGP…ADVDDGKVLF (97 aa). [2Fe-2S] cluster contacts are provided by cysteine 154, histidine 156, cysteine 172, and histidine 175. Cysteines 159 and 174 form a disulfide.

This sequence belongs to the Rieske iron-sulfur protein family. As to quaternary structure, the 4 large subunits of the cytochrome b6-f complex are cytochrome b6, subunit IV (17 kDa polypeptide, petD), cytochrome f and the Rieske protein, while the 4 small subunits are petG, petL, petM and petN. The complex functions as a dimer. [2Fe-2S] cluster serves as cofactor.

Its subcellular location is the plastid. The protein resides in the chloroplast thylakoid membrane. It carries out the reaction 2 oxidized [plastocyanin] + a plastoquinol + 2 H(+)(in) = 2 reduced [plastocyanin] + a plastoquinone + 4 H(+)(out). Functionally, component of the cytochrome b6-f complex, which mediates electron transfer between photosystem II (PSII) and photosystem I (PSI), cyclic electron flow around PSI, and state transitions. The polypeptide is Cytochrome b6-f complex iron-sulfur subunit, chloroplastic (petC) (Oryza sativa subsp. japonica (Rice)).